We begin with the raw amino-acid sequence, 187 residues long: Acetyl-CoA decarbonylase/synthase complex subunit epsilon (187 aa).

M1 carries the blocked amino end (Met) modification.

It belongs to the CdhB family. Heterotetramer of two alpha and two epsilon subunits. The ACDS complex is made up of alpha, epsilon, beta, gamma and delta subunits with a probable stoichiometry of (alpha(2)epsilon(2))(4)-beta(8)-(gamma(1)delta(1))(8).

Its function is as follows. Part of a complex that catalyzes the reversible cleavage of acetyl-CoA, allowing autotrophic growth from CO(2). The alpha-epsilon subcomponent functions as a carbon monoxide dehydrogenase. The precise role of the epsilon subunit is unclear; it may have a stabilizing role within the alpha(2)epsilon(2) component and/or be involved in electron transfer to FAD during a potential FAD-mediated CO oxidation. The chain is Acetyl-CoA decarbonylase/synthase complex subunit epsilon from Methanothrix soehngenii (Methanosaeta concilii).